The following is a 307-amino-acid chain: Porphobilinogen deaminase (307 aa).

Cys-239 carries the S-(dipyrrolylmethanemethyl)cysteine modification.

This sequence belongs to the HMBS family. Monomer. The cofactor is dipyrromethane.

The enzyme catalyses 4 porphobilinogen + H2O = hydroxymethylbilane + 4 NH4(+). It participates in porphyrin-containing compound metabolism; protoporphyrin-IX biosynthesis; coproporphyrinogen-III from 5-aminolevulinate: step 2/4. In terms of biological role, tetrapolymerization of the monopyrrole PBG into the hydroxymethylbilane pre-uroporphyrinogen in several discrete steps. The sequence is that of Porphobilinogen deaminase from Campylobacter jejuni subsp. doylei (strain ATCC BAA-1458 / RM4099 / 269.97).